The following is a 291-amino-acid chain: Beta-lactamase OXY-1 (291 aa).

An N-terminal signal peptide occupies residues 1–24 (MLKSSWRKTALMAAAAVPLLLASG). The active-site Acyl-ester intermediate is Ser73. 237–239 (KTG) is a binding site for substrate.

Belongs to the class-A beta-lactamase family.

It carries out the reaction a beta-lactam + H2O = a substituted beta-amino acid. Its function is as follows. Hydrolyzes broad-spectrum beta-lactam antibiotics. Active against cephalosporins. The sequence is that of Beta-lactamase OXY-1 (bla) from Klebsiella oxytoca.